The following is a 39-amino-acid chain: Neuropeptide F (39 aa).

Phenylalanine 39 bears the Phenylalanine amide mark.

The protein belongs to the NPY family. As to expression, neuronal somata and fibers.

It localises to the secreted. In terms of biological role, may have an important physiological role in neuroregulation. The protein is Neuropeptide F of Cornu aspersum (Brown garden snail).